A 282-amino-acid chain; its full sequence is NH(3)-dependent NAD(+) synthetase (282 aa).

Residue 51–58 participates in ATP binding; it reads GISGGVDS. Aspartate 57 is a binding site for Mg(2+). Arginine 148 lines the deamido-NAD(+) pocket. Threonine 168 lines the ATP pocket. Mg(2+) is bound at residue glutamate 173. Deamido-NAD(+)-binding residues include lysine 181 and aspartate 188. Residues lysine 197 and threonine 219 each contribute to the ATP site. 268-269 contributes to the deamido-NAD(+) binding site; that stretch reads HK.

It belongs to the NAD synthetase family. In terms of assembly, homodimer.

It catalyses the reaction deamido-NAD(+) + NH4(+) + ATP = AMP + diphosphate + NAD(+) + H(+). It functions in the pathway cofactor biosynthesis; NAD(+) biosynthesis; NAD(+) from deamido-NAD(+) (ammonia route): step 1/1. Its function is as follows. Catalyzes the ATP-dependent amidation of deamido-NAD to form NAD. Uses ammonia as a nitrogen source. In Burkholderia lata (strain ATCC 17760 / DSM 23089 / LMG 22485 / NCIMB 9086 / R18194 / 383), this protein is NH(3)-dependent NAD(+) synthetase.